The sequence spans 827 residues: Striatin homolog (827 aa).

Residues 37 to 109 (RAHWISEKAE…VEEEEEEDDK (73 aa)) adopt a coiled-coil conformation. 4 disordered regions span residues 99-123 (KVEE…SKDN), 181-270 (KDIN…QLQS), 311-362 (SSVS…DEQS), and 400-459 (EEGN…SELM). The span at 109-123 (KIPKNREPPKKSKDN) shows a compositional bias: basic and acidic residues. 2 stretches are compositionally biased toward low complexity: residues 184–270 (NNNN…QLQS) and 311–334 (SSVS…TSKQ). Residues 337–346 (EDPNNVTISK) show a composition bias toward polar residues. 3 stretches are compositionally biased toward low complexity: residues 347–356 (QQQQEQQQQQ), 416–432 (TPTT…STGS), and 439–453 (SSSS…NSNT). 6 WD repeats span residues 495–534 (SHFD…PTKK), 548–593 (GHTG…IDSY), 610–649 (GHQD…QLYT), 709–748 (NNNS…VVHS), 751–790 (AHSN…CIQD), and 797–827 (KYDE…RILN).

This sequence belongs to the WD repeat striatin family. Part of the core of STRIPAK complexes.

The protein resides in the cytoplasm. It localises to the membrane. In terms of biological role, calmodulin-binding scaffolding protein which is the center of the striatin-interacting phosphatase and kinase (STRIPAK) complexes. STRIPAK complexes have critical roles in protein (de)phosphorylation and are regulators of multiple signaling pathways including Hippo, MAPK, nuclear receptor and cytoskeleton remodeling. Different types of STRIPAK complexes are involved in a variety of biological processes such as cell growth, differentiation, apoptosis, metabolism and immune regulation. The protein is Striatin homolog (strn) of Dictyostelium discoideum (Social amoeba).